The sequence spans 302 residues: Aspartate carbamoyltransferase catalytic subunit (302 aa).

Residues arginine 54 and threonine 55 each contribute to the carbamoyl phosphate site. Lysine 82 contacts L-aspartate. Arginine 104, histidine 132, and glutamine 135 together coordinate carbamoyl phosphate. L-aspartate contacts are provided by arginine 165 and arginine 217. Glycine 257 and proline 258 together coordinate carbamoyl phosphate.

The protein belongs to the aspartate/ornithine carbamoyltransferase superfamily. ATCase family. As to quaternary structure, heterododecamer (2C3:3R2) of six catalytic PyrB chains organized as two trimers (C3), and six regulatory PyrI chains organized as three dimers (R2).

It catalyses the reaction carbamoyl phosphate + L-aspartate = N-carbamoyl-L-aspartate + phosphate + H(+). It participates in pyrimidine metabolism; UMP biosynthesis via de novo pathway; (S)-dihydroorotate from bicarbonate: step 2/3. Its function is as follows. Catalyzes the condensation of carbamoyl phosphate and aspartate to form carbamoyl aspartate and inorganic phosphate, the committed step in the de novo pyrimidine nucleotide biosynthesis pathway. The polypeptide is Aspartate carbamoyltransferase catalytic subunit (Thermus thermophilus (strain ATCC BAA-163 / DSM 7039 / HB27)).